A 415-amino-acid polypeptide reads, in one-letter code: ATP-dependent RNA helicase RhlB (415 aa).

The short motif at 9 to 37 (KKFSDFALYPPIVEVLDSKGFNNCTPIQA) is the Q motif element. The region spanning 40-219 (LPTTLAGKDV…FEHMNNAEYV (180 aa)) is the Helicase ATP-binding domain. An ATP-binding site is contributed by 53-60 (AQTGTGKT). The short motif at 165 to 168 (DEAD) is the DEAD box element. The Helicase C-terminal domain occupies 245–390 (RLLQTLIEEE…VSKYNSDALL (146 aa)). The interval 396–415 (PKRLTRRRSGAPRHNRKRPG) is disordered. Residues 398–415 (RLTRRRSGAPRHNRKRPG) are compositionally biased toward basic residues.

This sequence belongs to the DEAD box helicase family. RhlB subfamily. As to quaternary structure, component of the RNA degradosome, which is a multiprotein complex involved in RNA processing and mRNA degradation.

The protein resides in the cytoplasm. It catalyses the reaction ATP + H2O = ADP + phosphate + H(+). In terms of biological role, DEAD-box RNA helicase involved in RNA degradation. Has RNA-dependent ATPase activity and unwinds double-stranded RNA. This Sodalis glossinidius (strain morsitans) protein is ATP-dependent RNA helicase RhlB.